A 692-amino-acid chain; its full sequence is DNA repair protein RAD34 (692 aa).

The disordered stretch occupies residues 1 to 38 (MAKRLLESSQNDQANRKNSKIEKKEVSFYEEEETDDSF). Acidic residues predominate over residues 28–38 (FYEEEETDDSF).

It belongs to the XPC family.

Its subcellular location is the nucleus. Functionally, involved in nucleotide excision repair (NER) of damaged ribosomal DNA (rDNA). Required for the repair of the RNA polymerase I-transcribed strand of rDNA. The chain is DNA repair protein RAD34 (RAD34) from Saccharomyces cerevisiae (strain ATCC 204508 / S288c) (Baker's yeast).